The sequence spans 182 residues: NADH-quinone oxidoreductase subunit B (182 aa).

[4Fe-4S] cluster contacts are provided by C47, C48, C113, and C142.

This sequence belongs to the complex I 20 kDa subunit family. NDH-1 is composed of 14 different subunits. Subunits NuoB, C, D, E, F, and G constitute the peripheral sector of the complex. [4Fe-4S] cluster serves as cofactor.

Its subcellular location is the cell inner membrane. It catalyses the reaction a quinone + NADH + 5 H(+)(in) = a quinol + NAD(+) + 4 H(+)(out). Its function is as follows. NDH-1 shuttles electrons from NADH, via FMN and iron-sulfur (Fe-S) centers, to quinones in the respiratory chain. The immediate electron acceptor for the enzyme in this species is believed to be ubiquinone. Couples the redox reaction to proton translocation (for every two electrons transferred, four hydrogen ions are translocated across the cytoplasmic membrane), and thus conserves the redox energy in a proton gradient. This chain is NADH-quinone oxidoreductase subunit B, found in Anaeromyxobacter dehalogenans (strain 2CP-1 / ATCC BAA-258).